We begin with the raw amino-acid sequence, 228 residues long: DNA mismatch repair protein MutH (228 aa).

Belongs to the MutH family.

It localises to the cytoplasm. Functionally, sequence-specific endonuclease that cleaves unmethylated GATC sequences. It is involved in DNA mismatch repair. The polypeptide is DNA mismatch repair protein MutH (Yersinia pseudotuberculosis serotype IB (strain PB1/+)).